The chain runs to 334 residues: Biotin synthase (334 aa).

A Radical SAM core domain is found at Glu-55–Arg-280. 3 residues coordinate [4Fe-4S] cluster: Cys-70, Cys-74, and Cys-77. Cys-113, Cys-205, and Arg-275 together coordinate [2Fe-2S] cluster.

This sequence belongs to the radical SAM superfamily. Biotin synthase family. As to quaternary structure, homodimer. [4Fe-4S] cluster is required as a cofactor. Requires [2Fe-2S] cluster as cofactor.

The catalysed reaction is (4R,5S)-dethiobiotin + (sulfur carrier)-SH + 2 reduced [2Fe-2S]-[ferredoxin] + 2 S-adenosyl-L-methionine = (sulfur carrier)-H + biotin + 2 5'-deoxyadenosine + 2 L-methionine + 2 oxidized [2Fe-2S]-[ferredoxin]. It functions in the pathway cofactor biosynthesis; biotin biosynthesis; biotin from 7,8-diaminononanoate: step 2/2. In terms of biological role, catalyzes the conversion of dethiobiotin (DTB) to biotin by the insertion of a sulfur atom into dethiobiotin via a radical-based mechanism. The chain is Biotin synthase from Corynebacterium glutamicum (strain R).